A 515-amino-acid chain; its full sequence is ATP synthase subunit alpha (515 aa).

171–178 serves as a coordination point for ATP; that stretch reads GDRQTGKT.

Belongs to the ATPase alpha/beta chains family. In terms of assembly, F-type ATPases have 2 components, CF(1) - the catalytic core - and CF(0) - the membrane proton channel. CF(1) has five subunits: alpha(3), beta(3), gamma(1), delta(1), epsilon(1). CF(0) has three main subunits: a(1), b(2) and c(9-12). The alpha and beta chains form an alternating ring which encloses part of the gamma chain. CF(1) is attached to CF(0) by a central stalk formed by the gamma and epsilon chains, while a peripheral stalk is formed by the delta and b chains.

It is found in the cell inner membrane. It carries out the reaction ATP + H2O + 4 H(+)(in) = ADP + phosphate + 5 H(+)(out). Its function is as follows. Produces ATP from ADP in the presence of a proton gradient across the membrane. The alpha chain is a regulatory subunit. This Xylella fastidiosa (strain Temecula1 / ATCC 700964) protein is ATP synthase subunit alpha.